Consider the following 352-residue polypeptide: DNA-directed RNA polymerase subunit alpha (352 aa).

An alpha N-terminal domain (alpha-NTD) region spans residues 1–226; that stretch reads MLISQRPTLT…ELFGLARELN (226 aa). Residues 243–352 form an alpha C-terminal domain (alpha-CTD) region; sequence HIASFGLPIE…EQDYAETEQL (110 aa). The segment at 324 to 352 is disordered; the sequence is DASTGTWSDSGTFSDNDGGEQDYAETEQL. The segment covering 326–338 has biased composition (polar residues); that stretch reads STGTWSDSGTFSD. The segment covering 340–352 has biased composition (acidic residues); that stretch reads DGGEQDYAETEQL.

The protein belongs to the RNA polymerase alpha chain family. In terms of assembly, homodimer. The RNAP catalytic core consists of 2 alpha, 1 beta, 1 beta' and 1 omega subunit. When a sigma factor is associated with the core the holoenzyme is formed, which can initiate transcription.

It carries out the reaction RNA(n) + a ribonucleoside 5'-triphosphate = RNA(n+1) + diphosphate. In terms of biological role, DNA-dependent RNA polymerase catalyzes the transcription of DNA into RNA using the four ribonucleoside triphosphates as substrates. The protein is DNA-directed RNA polymerase subunit alpha of Nocardia farcinica (strain IFM 10152).